Reading from the N-terminus, the 332-residue chain is Cytochrome c1, heme protein, mitochondrial (332 aa).

A mitochondrion-targeting transit peptide spans 1-70 (MLARTCLRST…YYHLYGFASA (70 aa)). Residues 71 to 277 (MTPAEEGLHA…AEPEMDDRKR (207 aa)) lie on the Mitochondrial intermembrane side of the membrane. One can recognise a Cytochrome c domain in the interval 97-250 (QALRRGFQVY…GLVDYEDGTP (154 aa)). The heme c site is built by cysteine 110, cysteine 113, and histidine 114. Acidic residues predominate over residues 139–151 (EENEYDTEPNDQG). A disordered region spans residues 139–162 (EENEYDTEPNDQGEIEKRPGKLSD). Methionine 234 lines the heme c pocket. A helical transmembrane segment spans residues 278–296 (MGMKVLVVTSVLFALSVYV). Residues 297 to 332 (KRYKWAWLKSRKIVYDPPKSPPPATNLALPQQRAKS) lie on the Mitochondrial matrix side of the membrane.

It belongs to the cytochrome c family. In terms of assembly, component of the ubiquinol-cytochrome c oxidoreductase (cytochrome b-c1 complex, complex III, CIII), a multisubunit enzyme composed of 10 subunits. The complex is composed of 3 respiratory subunits cytochrome b (cob), cytochrome c1 (cyt-1) and Rieske protein (fes-1), 2 core protein subunits pep and ucr-1, and 5 low-molecular weight protein subunits qcr6, qcr7, qcr8, qcr9 and probably NCU16844/qcr10. The complex exists as an obligatory dimer and forms supercomplexes (SCs) in the inner mitochondrial membrane with NADH-ubiquinone oxidoreductase (complex I, CI) and cytochrome c oxidase (complex IV, CIV), resulting in different assemblies (supercomplexes SCI(1)III(2), SCIII(2)IV(1) and SCIII(2)IV(2) as well as higher order I(x)III(y)IV(z) megacomplexes). Heme c serves as cofactor.

The protein localises to the mitochondrion inner membrane. The enzyme catalyses a quinol + 2 Fe(III)-[cytochrome c](out) = a quinone + 2 Fe(II)-[cytochrome c](out) + 2 H(+)(out). Its function is as follows. Component of the ubiquinol-cytochrome c oxidoreductase, a multisubunit transmembrane complex that is part of the mitochondrial electron transport chain which drives oxidative phosphorylation. The respiratory chain contains 3 multisubunit complexes succinate dehydrogenase (complex II, CII), ubiquinol-cytochrome c oxidoreductase (cytochrome b-c1 complex, complex III, CIII) and cytochrome c oxidase (complex IV, CIV), that cooperate to transfer electrons derived from NADH and succinate to molecular oxygen, creating an electrochemical gradient over the inner membrane that drives transmembrane transport and the ATP synthase. The cytochrome b-c1 complex catalyzes electron transfer from ubiquinol to cytochrome c, linking this redox reaction to translocation of protons across the mitochondrial inner membrane, with protons being carried across the membrane as hydrogens on the quinol. In the process called Q cycle, 2 protons are consumed from the matrix, 4 protons are released into the intermembrane space and 2 electrons are passed to cytochrome c. Cytochrome c1 is a catalytic core subunit containing a c-type heme. It transfers electrons from the [2Fe-2S] iron-sulfur cluster of the Rieske protein to cytochrome c. This chain is Cytochrome c1, heme protein, mitochondrial (cyt-1), found in Neurospora crassa (strain ATCC 24698 / 74-OR23-1A / CBS 708.71 / DSM 1257 / FGSC 987).